We begin with the raw amino-acid sequence, 835 residues long: Ion-translocating oxidoreductase complex subunit C (835 aa).

2 4Fe-4S ferredoxin-type domains span residues 368–397 (YAPP…QQLY) and 407–436 (KSEE…IQYF). 8 residues coordinate [4Fe-4S] cluster: Cys-377, Cys-380, Cys-383, Cys-387, Cys-416, Cys-419, Cys-422, and Cys-426. Over residues 468–489 (AREEQERKARAQKAMEARRQEM) the composition is skewed to basic and acidic residues. 7 disordered regions span residues 468–492 (AREE…MKTA), 540–574 (QRKA…SKSA), 586–618 (KAAQ…AEDP), 634–666 (KAAQ…ADDP), 682–714 (KAAQ…ADDP), 730–762 (KAAQ…AEDP), and 778–811 (KAAQ…EDPR). Over residues 552 to 561 (TQNTDVSQVE) the composition is skewed to polar residues. The segment covering 648–657 (SSSNTLSVGN) has biased composition (polar residues). 2 stretches are compositionally biased toward polar residues: residues 745-756 (SSDTLSVGNETE) and 793-804 (SSDTLSVGNETE).

The protein belongs to the 4Fe4S bacterial-type ferredoxin family. RnfC subfamily. The complex is composed of six subunits: RnfA, RnfB, RnfC, RnfD, RnfE and RnfG. [4Fe-4S] cluster serves as cofactor.

It is found in the cell inner membrane. In terms of biological role, part of a membrane-bound complex that couples electron transfer with translocation of ions across the membrane. The sequence is that of Ion-translocating oxidoreductase complex subunit C from Pasteurella multocida (strain Pm70).